The primary structure comprises 145 residues: 3-hydroxyacyl-[acyl-carrier-protein] dehydratase FabZ (145 aa).

His49 is a catalytic residue.

The protein belongs to the thioester dehydratase family. FabZ subfamily.

It is found in the cytoplasm. The enzyme catalyses a (3R)-hydroxyacyl-[ACP] = a (2E)-enoyl-[ACP] + H2O. Involved in unsaturated fatty acids biosynthesis. Catalyzes the dehydration of short chain beta-hydroxyacyl-ACPs and long chain saturated and unsaturated beta-hydroxyacyl-ACPs. This chain is 3-hydroxyacyl-[acyl-carrier-protein] dehydratase FabZ, found in Rickettsia bellii (strain RML369-C).